Here is a 330-residue protein sequence, read N- to C-terminus: (11Z)-hexadec-11-enoyl-CoA conjugase (330 aa).

2 helical membrane passes run 37 to 57 and 65 to 85; these read IVVMNVIRFSYLHIAGLYGLY and LATSVFAIVLFFLGNFGITAG. The Histidine box-1 signature appears at 87–92; sequence HRLWSH. The helical transmembrane segment at 101–121 threads the bilayer; the sequence is LEILLMVFNSIAFQNTIFTWV. Positions 124-128 match the Histidine box-2 motif; that stretch reads HRLHH. A run of 2 helical transmembrane segments spans residues 185–205 and 216–238; these read AIPFIGTICFIIPTLAPMYFW and TVLRYIFSLNGTFLVNSAAHLWG. The short motif at 264–268 is the Histidine box-3 element; it reads HNYHH.

This sequence belongs to the fatty acid desaturase type 1 family. It depends on Fe(2+) as a cofactor. As to expression, highly expressed in the pheromone gland.

It localises to the membrane. It catalyses the reaction an 11,12-saturated fatty acyl-CoA + 2 Fe(II)-[cytochrome b5] + O2 + 2 H(+) = an (11Z)-Delta(11)-fatty acyl-CoA + 2 Fe(III)-[cytochrome b5] + 2 H2O. The catalysed reaction is (11Z)-hexadecenoyl-CoA + AH2 + O2 = (10E,12Z)-hexadecadienoyl-CoA + A + 2 H2O. In terms of biological role, fatty acid desaturase that catalyzes 2 consecutive steps in the biosynthesis of bombykol, a sex pheromone produced by the moth. First acts as an acyl-CoA Delta(11) desaturase (1) by catalyzing the formation of Delta(11) fatty acyl precursors. Then acts as a (11Z)-hexadec-11-enoyl-CoA conjugase (2) by converting a single cis double bond at position 11 of (11Z)-hexadec-11-enoyl-CoA into conjugated 10 trans and 12 cis double bonds. The protein is (11Z)-hexadec-11-enoyl-CoA conjugase of Bombyx mori (Silk moth).